Reading from the N-terminus, the 162-residue chain is Nucleotide-binding protein Adeh_0094 (162 aa).

This sequence belongs to the YajQ family.

Nucleotide-binding protein. This Anaeromyxobacter dehalogenans (strain 2CP-C) protein is Nucleotide-binding protein Adeh_0094.